We begin with the raw amino-acid sequence, 567 residues long: PEX5-related protein (567 aa).

The interval 56–105 (SEPVSQPQTKAKKSEPSSKSSSLKKKADGSDLISADAEQRAQALRGPETS) is disordered. Ser146 is modified (phosphoserine). Positions 150–169 (LWSAEHRSQPELSTGKSALN) are disordered. 3 positions are modified to phosphoserine: Ser194, Ser198, and Ser202. TPR repeat units follow at residues 267–300 (WPGA…DPGD), 301–334 (AEAW…QPNN), and 336–368 (KALM…NPKY). 2 positions are modified to phosphoserine: Ser386 and Ser388. 3 TPR repeats span residues 415–448 (PDLQ…RPED), 450–482 (SLWN…QPGF), and 484–516 (RSRY…QRKS).

Belongs to the peroxisomal targeting signal receptor family. As to quaternary structure, interacts with RAB8B. Forms an obligate 4:4 complex with HCN2. Interacts with HCN3. Interacts with HCN4 with a 4:4 HCN4:PEX5L stoichiometry; reduces the effects of cAMP on the voltage-dependence and rate of activation of HCN4.

It is found in the cytoplasm. Its subcellular location is the membrane. Its function is as follows. Accessory subunit of hyperpolarization-activated cyclic nucleotide-gated (HCN) channels, regulating their cell-surface expression and cyclic nucleotide dependence. The chain is PEX5-related protein (Pex5l) from Mus musculus (Mouse).